The sequence spans 486 residues: Retrograde regulation protein 3 (486 aa).

Residues 27 to 35 (ETLDFSLVT) carry the 9aaTAD 1 motif. Polar residues-rich tracts occupy residues 75-94 (NNNLMGSQARSNSQTPTAST) and 101-130 (SQSSYLDDMFRTSQGGRPVTQNSISSIGQG). Residues 75-130 (NNNLMGSQARSNSQTPTASTIYEEAESQSSYLDDMFRTSQGGRPVTQNSISSIGQG) form a disordered region. Phosphoserine occurs at positions 81, 123, and 142. Threonine 150 bears the Phosphothreonine mark. Positions 189–197 (SSINSDMMT) match the 9aaTAD 2 motif. Phosphoserine occurs at positions 227, 236, and 241. The interval 243–274 (RHGSINTPRTRHTSISSNMTENIGPGSVPKIL) is disordered. A compositionally biased stretch (polar residues) spans 246 to 263 (SINTPRTRHTSISSNMTE). Serine 269 is subject to Phosphoserine. The region spanning 285–344 (RKREFHNAVERRRRELIKQKIKELGQLVPPSLLNYDDLGKQIKPNKGIILDRTVEYLQYL) is the bHLH domain. Residues 374–395 (ALSPFTNNHHASSGQNNSENSE) are disordered.

Binds DNA as a heterodimer with RTG1.

The protein resides in the nucleus. Transcription factor that regulates CIT2 gene expression. Binds to two identical sites oriented as inverted repeats 28 bp apart in a regulatory upstream activation sequence element (UASR) in the CIT2 promoter. The core binding site is 5'-GGTCAC-3'. In Saccharomyces cerevisiae (strain ATCC 204508 / S288c) (Baker's yeast), this protein is Retrograde regulation protein 3 (RTG3).